Here is a 143-residue protein sequence, read N- to C-terminus: Meiotically up-regulated gene 128 protein (143 aa).

Has a role in meiosis. The chain is Meiotically up-regulated gene 128 protein (mug128) from Schizosaccharomyces pombe (strain 972 / ATCC 24843) (Fission yeast).